Reading from the N-terminus, the 320-residue chain is UDP-3-O-acyl-N-acetylglucosamine deacetylase (320 aa).

Residues His92, His251, and Asp255 each coordinate Zn(2+). The active-site Proton donor is the His278.

Belongs to the LpxC family. It depends on Zn(2+) as a cofactor.

It catalyses the reaction a UDP-3-O-[(3R)-3-hydroxyacyl]-N-acetyl-alpha-D-glucosamine + H2O = a UDP-3-O-[(3R)-3-hydroxyacyl]-alpha-D-glucosamine + acetate. Its pathway is glycolipid biosynthesis; lipid IV(A) biosynthesis; lipid IV(A) from (3R)-3-hydroxytetradecanoyl-[acyl-carrier-protein] and UDP-N-acetyl-alpha-D-glucosamine: step 2/6. Catalyzes the hydrolysis of UDP-3-O-myristoyl-N-acetylglucosamine to form UDP-3-O-myristoylglucosamine and acetate, the committed step in lipid A biosynthesis. The protein is UDP-3-O-acyl-N-acetylglucosamine deacetylase of Psychrobacter cryohalolentis (strain ATCC BAA-1226 / DSM 17306 / VKM B-2378 / K5).